The primary structure comprises 232 residues: Large ribosomal subunit protein uL1 (232 aa).

The protein belongs to the universal ribosomal protein uL1 family. As to quaternary structure, part of the 50S ribosomal subunit.

Functionally, binds directly to 23S rRNA. The L1 stalk is quite mobile in the ribosome, and is involved in E site tRNA release. Its function is as follows. Protein L1 is also a translational repressor protein, it controls the translation of the L11 operon by binding to its mRNA. The protein is Large ribosomal subunit protein uL1 of Hahella chejuensis (strain KCTC 2396).